The primary structure comprises 178 residues: Chorion class high-cysteine HCB protein 13 (178 aa).

Positions 1 to 21 are cleaved as a signal peptide; that stretch reads MAAKLILFVCAIALVAQSVLG. The interval 22-46 is left arm; the sequence is TGCGCCCRGCGCGCGGCGSRCCDRF. The central domain stretch occupies residues 47–110; it reads CLCSNSAAPT…GDGCVGITQS (64 aa). The right arm (Gly-rich tandem repeats) stretch occupies residues 111 to 178; it reads CGGCGCGCGG…GCGCGGCGCC (68 aa).

It belongs to the chorion protein family.

Functionally, this protein is one of many from the eggshell of the silk moth. In Bombyx mori (Silk moth), this protein is Chorion class high-cysteine HCB protein 13.